A 497-amino-acid polypeptide reads, in one-letter code: Di-/tripeptide transporter (497 aa).

Residues 1–36 lie on the Cytoplasmic side of the membrane; it reads MQNLNKTEKTFFGQPRGLLTLFQTEFWERFSYYGMR. A helical transmembrane segment spans residues 37–55; the sequence is AILVYYLYALTTADNAGLG. Residues 56 to 64 lie on the Extracellular side of the membrane; sequence LPKAQAMAI. The helical transmembrane segment at 65–83 threads the bilayer; sequence VSIYGALVYLSTIVGGWVA. The Cytoplasmic segment spans residues 84 to 92; sequence DRLLGASRT. Residues 93–111 traverse the membrane as a helical segment; the sequence is IFLGGILITLGHVALATPF. Over 112-115 the chain is Extracellular; that stretch reads GLSS. The chain crosses the membrane as a helical span at residues 116–134; sequence LFVALFLIILGTGMLKPNI. Residues 135-154 lie on the Cytoplasmic side of the membrane; it reads SNMVGHLYSKDDSRRDTGFN. The helical transmembrane segment at 155–173 threads the bilayer; that stretch reads IFVVGINMGSLIAPLIVGT. The Extracellular segment spans residues 174-181; it reads VGQGVNYH. The helical transmembrane segment at 182-200 threads the bilayer; it reads LGFSLAAIGMIFALFAYWY. The Cytoplasmic segment spans residues 201-224; that stretch reads GRLRHFPEIGREPSNPMDAKAKRN. A helical membrane pass occupies residues 225-243; the sequence is FIITLTIVLIVALIGFFLI. Over 244 to 254 the chain is Extracellular; that stretch reads YQASPANFINN. Residues 255–273 form a helical membrane-spanning segment; the sequence is FINVLSIIGIVVPIIYFVM. The Cytoplasmic portion of the chain corresponds to 274-293; the sequence is MFTSKKVESDERRKLTAYIP. The helical transmembrane segment at 294-312 threads the bilayer; sequence LFLSAIVFWAIEEQSSTII. At 313–335 the chain is on the extracellular side; the sequence is AVWGESRSNLNPTWFGFTFHIDP. A helical membrane pass occupies residues 336–354; it reads SWYQLLNPLFIVLLSPIFV. At 355-372 the chain is on the cytoplasmic side; it reads RIWNKLGDRQPSTIVKFG. Residues 373–391 form a helical membrane-spanning segment; sequence LGLMLTGASYLIMTLPGLL. Residues 392-425 lie on the Extracellular side of the membrane; that stretch reads NGTSGRASALWLVLMFAVQMAGELLVSPVGLSVS. Residues 426 to 444 traverse the membrane as a helical segment; it reads TKLAPVAFQSQMMAMWFLA. The Cytoplasmic portion of the chain corresponds to 445–497; that stretch reads DSTSQAINAQITPIFKAATEVHFFAITGIIGIIVGIILLIIKKPILKLMGDVR.

Belongs to the major facilitator superfamily. Proton-dependent oligopeptide transporter (POT/PTR) (TC 2.A.17) family.

Its subcellular location is the cell membrane. Its function is as follows. Proton-dependent uptake of di- or tri-peptides. The polypeptide is Di-/tripeptide transporter (dtpT) (Lactococcus lactis subsp. cremoris (Streptococcus cremoris)).